Here is a 625-residue protein sequence, read N- to C-terminus: Probable potassium transport system protein Kup 1 (625 aa).

12 helical membrane passes run 14-34, 50-70, 104-124, 139-159, 170-190, 213-233, 249-269, 287-307, 339-359, 368-388, 396-416, and 421-441; these read LSLLALSALGIVFGDIGTSPL, AAAVLGALSLVIWTLFIITTV, IVALGLFGAALIYGDGAITPA, PALQPYVVPAAVVILLALFAI, LFGPVMLLWFVTIAVLGLVGI, GATGFLVLGSVFLCVTGAEAL, WFAVVFPSLIINYAGQAALVI, LLLPLIGLATLATIIASQSVI, IYVGAVNWLLMLVTVSLTIGF, AYGIAVSLTMLMTSALLFIAM, LLAAGAVAGVFLTIDSAFFLA, and IAEGGYVPLLLATSVYGLMWI.

Belongs to the HAK/KUP transporter (TC 2.A.72) family.

Its subcellular location is the cell inner membrane. The catalysed reaction is K(+)(in) + H(+)(in) = K(+)(out) + H(+)(out). Functionally, transport of potassium into the cell. Likely operates as a K(+):H(+) symporter. This chain is Probable potassium transport system protein Kup 1, found in Bradyrhizobium sp. (strain ORS 278).